Consider the following 233-residue polypeptide: Chromosome partition protein MukE (233 aa).

The segment at 207 to 233 (SLSLHDESDDADVTMGNAADSVEDEQE) is disordered.

It belongs to the MukE family. In terms of assembly, interacts, and probably forms a ternary complex, with MukF and MukB. The complex formation is stimulated by calcium or magnesium.

Its subcellular location is the cytoplasm. The protein resides in the nucleoid. Involved in chromosome condensation, segregation and cell cycle progression. May participate in facilitating chromosome segregation by condensation DNA from both sides of a centrally located replisome during cell division. Probably acts via its interaction with MukB and MukF. This chain is Chromosome partition protein MukE, found in Yersinia pestis.